A 271-amino-acid polypeptide reads, in one-letter code: MPELPEVEVTRQGIAPYLVDQTVVELIVRNASLRWPVPDLAHNIVGQTILSVRRRAKYLLIDTEAGITIVHLGMSGSLRILPRNTPVEKHDHIDLVLANGRMLRFNDPRRFGAWLWYELPEEAHPLLAKLGPEPLSEAFNPLQLLTALKGKKKAIKLCLMDNHIVVGVGNIYANEALFAAGIHPESEAGKIDIEKLTLLVVEVKQILAQAIKQGGTTLKDFTNADGKPGYFAQKLHVYGRGSKSCTHCGNLLSEIRLGQRTTVFCGLCQTK.

Pro-2 functions as the Schiff-base intermediate with DNA in the catalytic mechanism. Glu-3 (proton donor) is an active-site residue. Lys-57 acts as the Proton donor; for beta-elimination activity in catalysis. DNA-binding residues include His-90, Arg-109, and Lys-151. The FPG-type zinc-finger motif lies at 236 to 270; the sequence is HVYGRGSKSCTHCGNLLSEIRLGQRTTVFCGLCQT. Arg-260 functions as the Proton donor; for delta-elimination activity in the catalytic mechanism.

It belongs to the FPG family. As to quaternary structure, monomer. Zn(2+) is required as a cofactor.

It catalyses the reaction Hydrolysis of DNA containing ring-opened 7-methylguanine residues, releasing 2,6-diamino-4-hydroxy-5-(N-methyl)formamidopyrimidine.. It carries out the reaction 2'-deoxyribonucleotide-(2'-deoxyribose 5'-phosphate)-2'-deoxyribonucleotide-DNA = a 3'-end 2'-deoxyribonucleotide-(2,3-dehydro-2,3-deoxyribose 5'-phosphate)-DNA + a 5'-end 5'-phospho-2'-deoxyribonucleoside-DNA + H(+). In terms of biological role, involved in base excision repair of DNA damaged by oxidation or by mutagenic agents. Acts as a DNA glycosylase that recognizes and removes damaged bases. Has a preference for oxidized purines, such as 7,8-dihydro-8-oxoguanine (8-oxoG). Has AP (apurinic/apyrimidinic) lyase activity and introduces nicks in the DNA strand. Cleaves the DNA backbone by beta-delta elimination to generate a single-strand break at the site of the removed base with both 3'- and 5'-phosphates. This Shewanella denitrificans (strain OS217 / ATCC BAA-1090 / DSM 15013) protein is Formamidopyrimidine-DNA glycosylase.